The sequence spans 278 residues: Elongation factor Ts (278 aa).

The segment at 82–85 (TDFV) is involved in Mg(2+) ion dislocation from EF-Tu.

Belongs to the EF-Ts family.

The protein localises to the cytoplasm. In terms of biological role, associates with the EF-Tu.GDP complex and induces the exchange of GDP to GTP. It remains bound to the aminoacyl-tRNA.EF-Tu.GTP complex up to the GTP hydrolysis stage on the ribosome. This chain is Elongation factor Ts, found in Streptomyces griseus subsp. griseus (strain JCM 4626 / CBS 651.72 / NBRC 13350 / KCC S-0626 / ISP 5235).